A 193-amino-acid polypeptide reads, in one-letter code: Biphenyl dioxygenase subunit beta (193 aa).

This sequence belongs to the bacterial ring-hydroxylating dioxygenase beta subunit family. As to quaternary structure, heterohexamer consisting of 3 BphA1 subunits and 3 BphA2 subunits. A ferredoxin (BphA3) and a ferredoxin reductase (BphA4) must be present to obtain activity.

It catalyses the reaction biphenyl + NADH + O2 + H(+) = (2R,3S)-3-phenylcyclohexa-3,5-diene-1,2-diol + NAD(+). It participates in xenobiotic degradation; biphenyl degradation; 2-hydroxy-2,4-pentadienoate and benzoate from biphenyl: step 1/4. Its function is as follows. The beta subunit may be responsible for the substrate specificity of the enzyme. This chain is Biphenyl dioxygenase subunit beta (bphA2), found in Pseudomonas sp. (strain KKS102).